A 146-amino-acid chain; its full sequence is MAQLLMVTVTFGCISLLYLLPGTLSGSLGKGLRPREPPAKIPSSGPQPGHPSLRPVVWKPPHALQPQGRGNPALATVHLPQGGGSRHPGPQRHVGSRRPHAQLLRVGCVLGTCQVQNLSHRLWQLVRPSGRRDSAPVDPSSPHSYG.

Positions 1–25 (MAQLLMVTVTFGCISLLYLLPGTLS) are cleaved as a signal peptide. Residues 26 to 96 (GSLGKGLRPR…HPGPQRHVGS (71 aa)) constitute a propeptide that is removed on maturation. The interval 29–99 (GKGLRPREPP…PQRHVGSRRP (71 aa)) is disordered. An intrachain disulfide couples cysteine 108 to cysteine 113. A Tyrosine amide modification is found at tyrosine 145.

It belongs to the adrenomedullin family. In terms of tissue distribution, expression was restricted to the intermediate and anterior lobes of the pituitary.

It localises to the secreted. In terms of biological role, intermedin/ADM2 is a peptide hormone that plays a role as physiological regulator of gastrointestinal and cardiovascular bioactivities mediated by the CALCRL-RAMPs receptor complexes. Activates the cAMP-dependent pathway through interaction with CALCRL-RAMP3 receptor complex. This Rattus norvegicus (Rat) protein is Protein ADM2.